Here is a 159-residue protein sequence, read N- to C-terminus: Ribosomal RNA large subunit methyltransferase H (159 aa).

S-adenosyl-L-methionine is bound by residues leucine 76, glycine 108, and 127–132 (FGRLTY).

Belongs to the RNA methyltransferase RlmH family. In terms of assembly, homodimer.

The protein resides in the cytoplasm. The catalysed reaction is pseudouridine(1915) in 23S rRNA + S-adenosyl-L-methionine = N(3)-methylpseudouridine(1915) in 23S rRNA + S-adenosyl-L-homocysteine + H(+). In terms of biological role, specifically methylates the pseudouridine at position 1915 (m3Psi1915) in 23S rRNA. The sequence is that of Ribosomal RNA large subunit methyltransferase H from Enterococcus faecalis (strain ATCC 700802 / V583).